Consider the following 96-residue polypeptide: Aspartyl/glutamyl-tRNA(Asn/Gln) amidotransferase subunit C (96 aa).

This sequence belongs to the GatC family. As to quaternary structure, heterotrimer of A, B and C subunits.

The enzyme catalyses L-glutamyl-tRNA(Gln) + L-glutamine + ATP + H2O = L-glutaminyl-tRNA(Gln) + L-glutamate + ADP + phosphate + H(+). It catalyses the reaction L-aspartyl-tRNA(Asn) + L-glutamine + ATP + H2O = L-asparaginyl-tRNA(Asn) + L-glutamate + ADP + phosphate + 2 H(+). Functionally, allows the formation of correctly charged Asn-tRNA(Asn) or Gln-tRNA(Gln) through the transamidation of misacylated Asp-tRNA(Asn) or Glu-tRNA(Gln) in organisms which lack either or both of asparaginyl-tRNA or glutaminyl-tRNA synthetases. The reaction takes place in the presence of glutamine and ATP through an activated phospho-Asp-tRNA(Asn) or phospho-Glu-tRNA(Gln). The chain is Aspartyl/glutamyl-tRNA(Asn/Gln) amidotransferase subunit C from Acaryochloris marina (strain MBIC 11017).